A 321-amino-acid chain; its full sequence is Malate dehydrogenase (321 aa).

Residues Gly10–Gly15 and Asp34 each bind NAD(+). Residues Arg83 and Arg89 each coordinate substrate. Residues Asn96 and Ile119 to Asn121 each bind NAD(+). 2 residues coordinate substrate: Asn121 and Arg152. His176 functions as the Proton acceptor in the catalytic mechanism.

It belongs to the LDH/MDH superfamily. MDH type 3 family.

It carries out the reaction (S)-malate + NAD(+) = oxaloacetate + NADH + H(+). Its function is as follows. Catalyzes the reversible oxidation of malate to oxaloacetate. The polypeptide is Malate dehydrogenase (Chelativorans sp. (strain BNC1)).